We begin with the raw amino-acid sequence, 340 residues long: Phosphoribosylformylglycinamidine cyclo-ligase (340 aa).

This sequence belongs to the AIR synthase family.

It localises to the cytoplasm. It catalyses the reaction 2-formamido-N(1)-(5-O-phospho-beta-D-ribosyl)acetamidine + ATP = 5-amino-1-(5-phospho-beta-D-ribosyl)imidazole + ADP + phosphate + H(+). It functions in the pathway purine metabolism; IMP biosynthesis via de novo pathway; 5-amino-1-(5-phospho-D-ribosyl)imidazole from N(2)-formyl-N(1)-(5-phospho-D-ribosyl)glycinamide: step 2/2. This chain is Phosphoribosylformylglycinamidine cyclo-ligase, found in Streptococcus gordonii (strain Challis / ATCC 35105 / BCRC 15272 / CH1 / DL1 / V288).